The sequence spans 372 residues: NAD(P)H-quinone oxidoreductase subunit 1, chloroplastic (372 aa).

A run of 8 helical transmembrane segments spans residues 28 to 48 (IWIC…VLVI), 65 to 85 (PEYA…KLIL), 97 to 117 (WLFT…YLVV), 128 to 148 (IGIG…GLLI), 166 to 186 (AAQA…IILM), 254 to 274 (FGLF…FVSV), 312 to 332 (GIIG…LAVL), and 352 to 372 (FLLP…ITLL).

Belongs to the complex I subunit 1 family. NDH is composed of at least 16 different subunits, 5 of which are encoded in the nucleus.

It localises to the plastid. Its subcellular location is the chloroplast thylakoid membrane. The catalysed reaction is a plastoquinone + NADH + (n+1) H(+)(in) = a plastoquinol + NAD(+) + n H(+)(out). It catalyses the reaction a plastoquinone + NADPH + (n+1) H(+)(in) = a plastoquinol + NADP(+) + n H(+)(out). NDH shuttles electrons from NAD(P)H:plastoquinone, via FMN and iron-sulfur (Fe-S) centers, to quinones in the photosynthetic chain and possibly in a chloroplast respiratory chain. The immediate electron acceptor for the enzyme in this species is believed to be plastoquinone. Couples the redox reaction to proton translocation, and thus conserves the redox energy in a proton gradient. The chain is NAD(P)H-quinone oxidoreductase subunit 1, chloroplastic from Staurastrum punctulatum (Green alga).